The chain runs to 1682 residues: Sodium channel protein type 7 subunit alpha (1682 aa).

The Cytoplasmic portion of the chain corresponds to 1–117; it reads MLASPEPKGL…RRTTIKVLVH (117 aa). Residues 100 to 401 form an I repeat; the sequence is TLSPFNCIRR…ILAMAYEEEK (302 aa). The helical transmembrane segment at 118 to 137 threads the bilayer; that stretch reads PFFQLFILISVLIDCVFMSL. The Extracellular segment spans residues 138 to 141; the sequence is TNLP. The chain crosses the membrane as a helical span at residues 142–167; the sequence is KWRPVLENTLLGIYTFEILVKLFARG. Residues 168–178 are Cytoplasmic-facing; sequence VWAGSFSFLGD. A helical membrane pass occupies residues 179–196; the sequence is PWNWLDFSVTVFEVIIRY. Over 197–200 the chain is Extracellular; that stretch reads SPLD. The chain crosses the membrane as a helical span at residues 201–219; sequence FIPTLQTARTLRILKIIPL. Over 220 to 237 the chain is Cytoplasmic; sequence NQGLKSLVGVLIHCLKQL. A helical transmembrane segment spans residues 238-259; sequence IGVIILTLFFLSIFSLIGMGLF. Topologically, residues 260–338 are extracellular; sequence MGNLKHKCFR…PDQGFTNFDS (79 aa). A disulfide bridge connects residues cysteine 267 and cysteine 307. N-linked (GlcNAc...) asparagine glycosylation is found at asparagine 276, asparagine 281, and asparagine 309. The segment at residues 339–366 is an intramembrane region (pore-forming); the sequence is FGWALFALFRLMAQDYPEVLYHQILYAS. Position 367 (glycine 367) is a topological domain, extracellular. A helical transmembrane segment spans residues 368 to 407; it reads KVYMIFFVVVSFLFSFYMASLFLGILAMAYEEEKQRVGEI. Over 408 to 505 the chain is Cytoplasmic; sequence SKKIEPKFQQ…EFVHRIIMAP (98 aa). The residue at position 442 (serine 442) is a Phosphoserine; by PKA. One copy of the II repeat lies at 487–758; the sequence is CSPCWLKLKE…QLAVARIKKG (272 aa). A helical transmembrane segment spans residues 506–521; sequence FTDLFLIICIILNVCF. Topologically, residues 522–530 are extracellular; that stretch reads LTLEHYPMS. A helical membrane pass occupies residues 531–559; the sequence is KQTNTLLNIGNLVFIGIFTAEMIFKIIAM. The Cytoplasmic portion of the chain corresponds to 560–568; it reads HPYGYFQVG. The chain crosses the membrane as a helical span at residues 569–586; it reads WNIFDSMIVFHGLIELCL. At 587 to 592 the chain is on the extracellular side; sequence ANVAGM. Residues 593–609 traverse the membrane as a helical segment; the sequence is ALLRLFRMLRIFKLGKY. The Cytoplasmic segment spans residues 610 to 626; it reads WPTFQILMWSLSNSWVA. The chain crosses the membrane as a helical span at residues 627-655; the sequence is LKDLVLLLFTFIFFSAAFGMKLFGKNYEE. At 656-673 the chain is on the extracellular side; the sequence is FVCHIDKDCQLPRWHMHD. Cystine bridges form between cysteine 658–cysteine 664 and cysteine 696–cysteine 705. Residues 674 to 700 constitute an intramembrane region (pore-forming); sequence FFHSFLNVFRILCGEWVETLWDCMEVA. Glycine 701 is a topological domain (extracellular). Residues 702 to 732 form a helical membrane-spanning segment; the sequence is QSWCIPFYLMVILIGNLLVLYLFLALVSSFS. Over 733–934 the chain is Cytoplasmic; it reads SCKDVTAEEN…KTCCKIVENN (202 aa). Threonine 777 bears the Phosphothreonine; by PKA mark. Positions 801–871 are disordered; sequence TQDFLKDKEK…SKEKIKQSSS (71 aa). Residues 804-819 show a composition bias toward basic and acidic residues; the sequence is FLKDKEKSSGTEKNAT. Residues 820–834 are compositionally biased toward polar residues; it reads ENESQSLIPSPSVSE. Serine 843 bears the Phosphoserine mark. Phosphoserine; by PKA is present on residues serine 869 and serine 905. The III repeat unit spans residues 916–1224; it reads KGKIWQNIRK…RKQYRRLKKL (309 aa). A helical transmembrane segment spans residues 935–953; the sequence is WFKCFIGLVTLLSTGTLAF. The Extracellular portion of the chain corresponds to 954-961; the sequence is EDIYMDQR. The helical transmembrane segment at 962 to 990 threads the bilayer; that stretch reads KTIKILLEYADMIFTYIFILEMLLKWMAY. Topologically, residues 991-998 are cytoplasmic; sequence GFKAYFSN. Residues 999–1020 traverse the membrane as a helical segment; it reads GWYRLDFVVVIVFCLSLIGKTR. Position 1021 (glutamate 1021) is a topological domain, extracellular. A helical membrane pass occupies residues 1022–1040; the sequence is ELKPLISMKFLRPLRVLSQ. Topologically, residues 1041–1055 are cytoplasmic; sequence FERMKVVVRALIKTT. Residues 1056–1080 form a helical membrane-spanning segment; it reads LPTLNVFLVCLMIWLIFSIMGVDLF. Topologically, residues 1081–1127 are extracellular; that stretch reads AGRFYECIDPTSGERFPSSEVMNKSRCESLLFNESMLWENAKMNFDN. Cysteine 1087 and cysteine 1107 are disulfide-bonded. Residues asparagine 1103 and asparagine 1113 are each glycosylated (N-linked (GlcNAc...) asparagine). Residues 1128–1154 constitute an intramembrane region (pore-forming); the sequence is VGNGFLSLLQVATFNGWITIMNSAIDS. The Extracellular segment spans residues 1155-1167; sequence VAVNIQPHFEVNI. The helical transmembrane segment at 1168–1202 threads the bilayer; sequence YMYCYFINFIIFGVFLPLSMLITVIIDNFNKHKIK. Over 1203-1250 the chain is Cytoplasmic; the sequence is LGGSNIFITVKQRKQYRRLKKLMYEDSQRPVPRPLNKLQGFIFDVVTS. The IV repeat unit spans residues 1233–1531; it reads VPRPLNKLQG…WKRFDPDRTQ (299 aa). The chain crosses the membrane as a helical span at residues 1251 to 1272; that stretch reads QAFNVIVMVLICFQAIAMMIDT. Residues 1273–1276 are Extracellular-facing; sequence DVQS. The chain crosses the membrane as a helical span at residues 1277–1305; it reads LQMSIALYWINSIFVMLYTMECILKLIAF. Over 1306-1312 the chain is Cytoplasmic; it reads RCFYFTI. The helical transmembrane segment at 1313–1338 threads the bilayer; that stretch reads AWNIFDFMVVIFSITGLCLPMTVGSY. At 1339–1341 the chain is on the extracellular side; that stretch reads LVP. The helical transmembrane segment at 1342 to 1362 threads the bilayer; it reads PSLVQLILLSRIIHMLRLGKG. Over 1363-1377 the chain is Cytoplasmic; it reads PKVFHNLMLPLMLSL. The helical transmembrane segment at 1378–1402 threads the bilayer; the sequence is PALLNIILLIFLVMFIYAVFGMYNF. Over 1403 to 1420 the chain is Extracellular; the sequence is AYVKKEAGINDVSNFETF. Positions 1421 to 1444 form an intramembrane region, pore-forming; sequence GNSMLCLFQVAIFAGWDGMLDAIF. Topologically, residues 1445-1468 are extracellular; it reads NSKWSDCDPDKINPGTQVRGDCGN. Residues cysteine 1451 and cysteine 1466 are joined by a disulfide bond. The chain crosses the membrane as a helical span at residues 1469 to 1504; that stretch reads PSVGIFYFVSYILISWLIIVNMYIVVVMEFLNIASK. The Cytoplasmic portion of the chain corresponds to 1505-1682; that stretch reads KKNKTLSEDD…KEKSPIQSQI (178 aa).

The protein belongs to the sodium channel (TC 1.A.1.10) family. SCN7A subfamily. The sodium channel formed by SCN7A is probably a heterooligomeric complex consisting of the ion conducting pore forming alpha subunit SCN7A and regulatory beta subunits such as SCN3B. Interacts with ATP1A1; activates ATP1A1 and thereby indirectly signals to nearby neurons to regulate sodium homeostasis. In terms of tissue distribution, heart and uterus.

It is found in the cell membrane. It carries out the reaction Na(+)(in) = Na(+)(out). Its function is as follows. Sodium leak channel functioning as an osmosensor regulating sodium ion levels in various tissues and organs. While most sodium channels are voltage-gated, SCN7A is not and lets sodium flow through membrane along its concentration gradient. In glial cells of the central nervous system, senses body-fluid sodium levels and controls salt intake behavior as well as voluntary water intake through activation of nearby neurons to maintain appropriate sodium levels in the body. By mediating sodium influx into keratinocytes, also plays a role in skin barrier homeostasis. This is Sodium channel protein type 7 subunit alpha from Homo sapiens (Human).